Consider the following 213-residue polypeptide: uncharacterized protein (213 aa).

Positions 1–14 (MSSDVLVTTPAQRQ) are enriched in polar residues. Positions 1-26 (MSSDVLVTTPAQRQTEPHAEAVSRNR) are disordered. An HTH tetR-type domain is found at 29–89 (QATFRKVLAA…EVYLDLVRQV (61 aa)).

This is an uncharacterized protein from Mycobacterium tuberculosis (strain CDC 1551 / Oshkosh).